We begin with the raw amino-acid sequence, 159 residues long: 3-hydroxyacyl-[acyl-carrier-protein] dehydratase FabZ (159 aa).

The active site involves histidine 58.

It belongs to the thioester dehydratase family. FabZ subfamily.

Its subcellular location is the cytoplasm. The catalysed reaction is a (3R)-hydroxyacyl-[ACP] = a (2E)-enoyl-[ACP] + H2O. Functionally, involved in unsaturated fatty acids biosynthesis. Catalyzes the dehydration of short chain beta-hydroxyacyl-ACPs and long chain saturated and unsaturated beta-hydroxyacyl-ACPs. This Helicobacter pylori (strain Shi470) protein is 3-hydroxyacyl-[acyl-carrier-protein] dehydratase FabZ.